A 110-amino-acid polypeptide reads, in one-letter code: Large ribosomal subunit protein uL22 (110 aa).

The protein belongs to the universal ribosomal protein uL22 family. Part of the 50S ribosomal subunit.

In terms of biological role, this protein binds specifically to 23S rRNA; its binding is stimulated by other ribosomal proteins, e.g. L4, L17, and L20. It is important during the early stages of 50S assembly. It makes multiple contacts with different domains of the 23S rRNA in the assembled 50S subunit and ribosome. The globular domain of the protein is located near the polypeptide exit tunnel on the outside of the subunit, while an extended beta-hairpin is found that lines the wall of the exit tunnel in the center of the 70S ribosome. In Alkaliphilus metalliredigens (strain QYMF), this protein is Large ribosomal subunit protein uL22.